The following is a 387-amino-acid chain: 1-deoxy-D-xylulose 5-phosphate reductoisomerase (387 aa).

Thr-10, Gly-11, Ser-12, Val-13, Asn-38, and Asn-119 together coordinate NADPH. Lys-120 lines the 1-deoxy-D-xylulose 5-phosphate pocket. Position 121 (Glu-121) interacts with NADPH. Asp-145 lines the Mn(2+) pocket. Residues Ser-146, Glu-147, Ser-170, and His-193 each contribute to the 1-deoxy-D-xylulose 5-phosphate site. Glu-147 serves as a coordination point for Mn(2+). Gly-199 is a binding site for NADPH. 1-deoxy-D-xylulose 5-phosphate contacts are provided by Ser-206, Asn-211, Lys-212, and Glu-215. Glu-215 serves as a coordination point for Mn(2+).

It belongs to the DXR family. Mg(2+) is required as a cofactor. Requires Mn(2+) as cofactor.

The enzyme catalyses 2-C-methyl-D-erythritol 4-phosphate + NADP(+) = 1-deoxy-D-xylulose 5-phosphate + NADPH + H(+). The protein operates within isoprenoid biosynthesis; isopentenyl diphosphate biosynthesis via DXP pathway; isopentenyl diphosphate from 1-deoxy-D-xylulose 5-phosphate: step 1/6. Catalyzes the NADPH-dependent rearrangement and reduction of 1-deoxy-D-xylulose-5-phosphate (DXP) to 2-C-methyl-D-erythritol 4-phosphate (MEP). The sequence is that of 1-deoxy-D-xylulose 5-phosphate reductoisomerase from Wolbachia pipientis wMel.